Reading from the N-terminus, the 157-residue chain is Small ribosomal subunit protein uS13 (157 aa).

This sequence belongs to the universal ribosomal protein uS13 family. In terms of assembly, part of the 30S ribosomal subunit. Forms a loose heterodimer with protein S19. Forms two bridges to the 50S subunit in the 70S ribosome.

Located at the top of the head of the 30S subunit, it contacts several helices of the 16S rRNA. In the 70S ribosome it contacts the 23S rRNA (bridge B1a) and protein L5 of the 50S subunit (bridge B1b), connecting the 2 subunits; these bridges are implicated in subunit movement. The polypeptide is Small ribosomal subunit protein uS13 (Thermofilum pendens (strain DSM 2475 / Hrk 5)).